Here is a 274-residue protein sequence, read N- to C-terminus: Kit ligand (274 aa).

The N-terminal stretch at 1–25 is a signal peptide; that stretch reads MKKTQTWIITCIYLQLLLFNPLVKT. Topologically, residues 26–215 are extracellular; the sequence is KGICGKRVTD…SNSIGDSNLQ (190 aa). 2 disulfides stabilise this stretch: Cys-29/Cys-114 and Cys-68/Cys-164. Residues Asn-90, Asn-97, Asn-145, and Asn-196 are each glycosylated (N-linked (GlcNAc...) asparagine). The chain crosses the membrane as a helical span at residues 216-238; the sequence is WAAMALPAFFSLVIGFAFGALYW. At 239–274 the chain is on the cytoplasmic side; that stretch reads KKKQPNLTRTVENIQINEEDNEISMLQEKEREFQEV.

It belongs to the SCF family. As to quaternary structure, homodimer, non-covalently linked. A soluble form is produced by proteolytic processing of the extracellular domain.

Its subcellular location is the cytoplasm. It localises to the cytoskeleton. It is found in the cell membrane. The protein localises to the cell projection. The protein resides in the lamellipodium. Its subcellular location is the filopodium. It localises to the secreted. Its function is as follows. Stimulates the proliferation of mast cells. Able to augment the proliferation of both myeloid and lymphoid hematopoietic progenitors in bone marrow culture. Also mediates cell-cell adhesion. Acts synergistically with other cytokines, probably interleukins. The polypeptide is Kit ligand (KITLG) (Canis lupus familiaris (Dog)).